A 257-amino-acid chain; its full sequence is Snake venom serine protease KN10 (257 aa).

The signal sequence occupies residues 1-18; the sequence is MVLIRVLANLLILQLSYA. The propeptide occupies 19–24; the sequence is QKSSEL. The region spanning 25–248 is the Peptidase S1 domain; it reads VVGGDECNIN…HLDWIKSIIA (224 aa). Disulfide bonds link C31–C162, C49–C65, C141–C209, C173–C188, and C199–C224. H64 acts as the Charge relay system in catalysis. Residue N102 is glycosylated (N-linked (GlcNAc...) asparagine). The active-site Charge relay system is the D109. Residues N120 and N121 are each glycosylated (N-linked (GlcNAc...) asparagine). Catalysis depends on S203, which acts as the Charge relay system.

The protein belongs to the peptidase S1 family. Snake venom subfamily. In terms of assembly, monomer. Expressed by the venom gland.

It localises to the secreted. Functionally, snake venom serine protease that may act in the hemostasis system of the prey. The sequence is that of Snake venom serine protease KN10 from Trimeresurus stejnegeri (Chinese green tree viper).